Consider the following 359-residue polypeptide: Alanine racemase, biosynthetic (359 aa).

The active-site Proton acceptor; specific for D-alanine is the lysine 34. The residue at position 34 (lysine 34) is an N6-(pyridoxal phosphate)lysine. Arginine 129 contributes to the substrate binding site. The active-site Proton acceptor; specific for L-alanine is the tyrosine 255. Methionine 303 is a substrate binding site.

This sequence belongs to the alanine racemase family. Requires pyridoxal 5'-phosphate as cofactor.

The catalysed reaction is L-alanine = D-alanine. Its pathway is amino-acid biosynthesis; D-alanine biosynthesis; D-alanine from L-alanine: step 1/1. It functions in the pathway cell wall biogenesis; peptidoglycan biosynthesis. Its function is as follows. Catalyzes the interconversion of L-alanine and D-alanine. Provides the D-alanine required for cell wall biosynthesis. This chain is Alanine racemase, biosynthetic (alr), found in Escherichia coli O6:H1 (strain CFT073 / ATCC 700928 / UPEC).